Here is a 955-residue protein sequence, read N- to C-terminus: uncharacterized protein (955 aa).

The Importin N-terminal domain maps to 23 to 90 (ANNYLEEFQK…RNSLLQLFLA (68 aa)).

This is an uncharacterized protein from Schizosaccharomyces pombe (strain 972 / ATCC 24843) (Fission yeast).